The sequence spans 671 residues: DNA ligase (671 aa).

NAD(+) contacts are provided by residues 32–36 (DAEYD), 81–82 (SL), and Glu113. The N6-AMP-lysine intermediate role is filled by Lys115. Positions 136, 173, 290, and 314 each coordinate NAD(+). The Zn(2+) site is built by Cys408, Cys411, Cys426, and Cys432. Positions 593-671 (EIDSPFAGKT…ETEMLRLLGS (79 aa)) constitute a BRCT domain.

It belongs to the NAD-dependent DNA ligase family. LigA subfamily. Mg(2+) is required as a cofactor. Requires Mn(2+) as cofactor.

It catalyses the reaction NAD(+) + (deoxyribonucleotide)n-3'-hydroxyl + 5'-phospho-(deoxyribonucleotide)m = (deoxyribonucleotide)n+m + AMP + beta-nicotinamide D-nucleotide.. Its function is as follows. DNA ligase that catalyzes the formation of phosphodiester linkages between 5'-phosphoryl and 3'-hydroxyl groups in double-stranded DNA using NAD as a coenzyme and as the energy source for the reaction. It is essential for DNA replication and repair of damaged DNA. This chain is DNA ligase, found in Escherichia coli O1:K1 / APEC.